The primary structure comprises 143 residues: Transmembrane protein 207 (143 aa).

An N-terminal signal peptide occupies residues 1–29; sequence MSTSSPFRVASKIVTAGCLCLPLFQRVLS. The helical transmembrane segment at 52 to 72 threads the bilayer; the sequence is IWFFLLIFLVVLLCGVVLFCL.

In terms of assembly, interacts with WWOX.

The protein localises to the membrane. This chain is Transmembrane protein 207, found in Mus musculus (Mouse).